The following is a 694-amino-acid chain: N,N-dimethylglycine/sarcosine dehydrogenase (694 aa).

It in the N-terminal section; belongs to the NADH:flavin oxidoreductase/NADH oxidase family. As to quaternary structure, monomer. The purified enzyme exists in the form of a monomer, dimer or polymer under non-denaturing conditions, but only the monomeric protein exhibits enzyme activity. FAD serves as cofactor. NAD(+) is required as a cofactor. Requires NADP(+) as cofactor.

It is found in the cytoplasm. It carries out the reaction oxidized 2[4Fe-4S]-[ferredoxin] + N,N-dimethylglycine + H2O = reduced 2[4Fe-4S]-[ferredoxin] + sarcosine + formaldehyde + 2 H(+). The enzyme catalyses oxidized 2[4Fe-4S]-[ferredoxin] + sarcosine + H2O = reduced 2[4Fe-4S]-[ferredoxin] + formaldehyde + glycine + 2 H(+). Its activity is regulated as follows. Ca(2+) increases the activity by 12%, while the other metal ions tested have no or slightly inhibitory effects. The chelating agent EDTA inhibits the activity by 33%. Involved in degradation of glycine betaine. Catalyzes the demethylation of both N,N-dimethylglycine (DMG) and sarcosine, releasing formaldehyde and forming glycine as the final product. Does not show activity toward trimethylamine (TMA), histamine, glycine betaine (GB) or choline. The C-N bond in DMG is probably oxidized by removal of a hydride equivalent to form a labile imine intermediate, which is then spontaneously hydrolyzed in the presence of water, producing sarcosine and formaldehyde. The two protons subtracted from DMG are transferred to the non-covalently bound FAD, resulting in the reduced form of FAD, which is subsequently reoxidized by coupling with reduction of the enzyme-bound NAD(P)(+). Regeneration of NAD(P)(+) is achieved by electron transfer to the [4Fe-4S] cluster in the probable membrane-anchored ferredoxin csal_0991. The sequence is that of N,N-dimethylglycine/sarcosine dehydrogenase from Chromohalobacter salexigens (strain ATCC BAA-138 / DSM 3043 / CIP 106854 / NCIMB 13768 / 1H11).